The chain runs to 243 residues: Pyridoxine 5'-phosphate synthase (243 aa).

Asn9 is a 3-amino-2-oxopropyl phosphate binding site. 11-12 is a 1-deoxy-D-xylulose 5-phosphate binding site; that stretch reads DH. Arg20 is a 3-amino-2-oxopropyl phosphate binding site. Catalysis depends on His45, which acts as the Proton acceptor. Residues Arg47 and His52 each contribute to the 1-deoxy-D-xylulose 5-phosphate site. The active-site Proton acceptor is Glu72. 1-deoxy-D-xylulose 5-phosphate is bound at residue Thr102. Residue His193 is the Proton donor of the active site. 3-amino-2-oxopropyl phosphate is bound by residues Gly194 and 215–216; that span reads GH.

Belongs to the PNP synthase family. In terms of assembly, homooctamer; tetramer of dimers.

It is found in the cytoplasm. The catalysed reaction is 3-amino-2-oxopropyl phosphate + 1-deoxy-D-xylulose 5-phosphate = pyridoxine 5'-phosphate + phosphate + 2 H2O + H(+). The protein operates within cofactor biosynthesis; pyridoxine 5'-phosphate biosynthesis; pyridoxine 5'-phosphate from D-erythrose 4-phosphate: step 5/5. In terms of biological role, catalyzes the complicated ring closure reaction between the two acyclic compounds 1-deoxy-D-xylulose-5-phosphate (DXP) and 3-amino-2-oxopropyl phosphate (1-amino-acetone-3-phosphate or AAP) to form pyridoxine 5'-phosphate (PNP) and inorganic phosphate. The chain is Pyridoxine 5'-phosphate synthase from Yersinia pestis.